The following is a 168-amino-acid chain: Protein-export protein SecB (168 aa).

This sequence belongs to the SecB family. Homotetramer, a dimer of dimers. One homotetramer interacts with 1 SecA dimer.

The protein localises to the cytoplasm. Its function is as follows. One of the proteins required for the normal export of preproteins out of the cell cytoplasm. It is a molecular chaperone that binds to a subset of precursor proteins, maintaining them in a translocation-competent state. It also specifically binds to its receptor SecA. This chain is Protein-export protein SecB, found in Rhizobium meliloti (strain 1021) (Ensifer meliloti).